A 93-amino-acid polypeptide reads, in one-letter code: Large ribosomal subunit protein eL31 (93 aa).

Belongs to the eukaryotic ribosomal protein eL31 family.

This Methanosarcina mazei (strain ATCC BAA-159 / DSM 3647 / Goe1 / Go1 / JCM 11833 / OCM 88) (Methanosarcina frisia) protein is Large ribosomal subunit protein eL31.